We begin with the raw amino-acid sequence, 689 residues long: Glycine--tRNA ligase beta subunit (689 aa).

It belongs to the class-II aminoacyl-tRNA synthetase family. In terms of assembly, tetramer of two alpha and two beta subunits.

The protein localises to the cytoplasm. The enzyme catalyses tRNA(Gly) + glycine + ATP = glycyl-tRNA(Gly) + AMP + diphosphate. This is Glycine--tRNA ligase beta subunit from Shewanella woodyi (strain ATCC 51908 / MS32).